Here is a 98-residue protein sequence, read N- to C-terminus: Small ribosomal subunit protein bS20 (98 aa).

It belongs to the bacterial ribosomal protein bS20 family.

Its function is as follows. Binds directly to 16S ribosomal RNA. The protein is Small ribosomal subunit protein bS20 of Parasynechococcus marenigrum (strain WH8102).